A 271-amino-acid polypeptide reads, in one-letter code: Cytochrome b termination protein 1 (271 aa).

It is found in the mitochondrion. In terms of biological role, involved in 5'-end processing of mitochondrial COB, 15S rRNA, and RPM1 transcript. May also have a role in 3'-end processing of the COB pre-mRNA. The protein is Cytochrome b termination protein 1 (CBT1) of Saccharomyces cerevisiae (strain ATCC 204508 / S288c) (Baker's yeast).